Consider the following 646-residue polypeptide: Threonine--tRNA ligase (646 aa).

Residues 1 to 61 form the TGS domain; it reads MIKITFPDGN…NEDSNFEIVT (61 aa). The tract at residues 242 to 540 is catalytic; it reads DHRKLGRELD…LIEVYKGAFP (299 aa). Residues cysteine 336, histidine 387, and histidine 517 each contribute to the Zn(2+) site.

It belongs to the class-II aminoacyl-tRNA synthetase family. Homodimer. Zn(2+) serves as cofactor.

The protein localises to the cytoplasm. It carries out the reaction tRNA(Thr) + L-threonine + ATP = L-threonyl-tRNA(Thr) + AMP + diphosphate + H(+). In terms of biological role, catalyzes the attachment of threonine to tRNA(Thr) in a two-step reaction: L-threonine is first activated by ATP to form Thr-AMP and then transferred to the acceptor end of tRNA(Thr). Also edits incorrectly charged L-seryl-tRNA(Thr). The chain is Threonine--tRNA ligase from Lactococcus lactis subsp. lactis (strain IL1403) (Streptococcus lactis).